A 128-amino-acid chain; its full sequence is Large ribosomal subunit protein bL19 (128 aa).

The protein belongs to the bacterial ribosomal protein bL19 family.

Its function is as follows. This protein is located at the 30S-50S ribosomal subunit interface and may play a role in the structure and function of the aminoacyl-tRNA binding site. This chain is Large ribosomal subunit protein bL19, found in Ralstonia nicotianae (strain ATCC BAA-1114 / GMI1000) (Ralstonia solanacearum).